The primary structure comprises 249 residues: MPRYRLTIEYDGRPYNGFQAQASQPSVQGAIEAAVKAFTGQTIRIAAAGRTDTGVHATAQVVHVDLERDWPAETVMNALNAHLVREAISVLDAVVVSDDWHARFSANERRYLYRILNRRAPPALERGKVWHVKKPIDADAMQTAAQALVGLHDFTTFRDMACQAKSPLKTLDVARVSRVGDEVHLVFEARSFLHRQVRSMTGTLAEVGVGRWTADDVMAALEARDRTACGPVAPADGLYLTGVGYEGEG.

Asp52 serves as the catalytic Nucleophile. Tyr111 contacts substrate.

The protein belongs to the tRNA pseudouridine synthase TruA family. Homodimer.

It carries out the reaction uridine(38/39/40) in tRNA = pseudouridine(38/39/40) in tRNA. Functionally, formation of pseudouridine at positions 38, 39 and 40 in the anticodon stem and loop of transfer RNAs. In Caulobacter sp. (strain K31), this protein is tRNA pseudouridine synthase A.